The sequence spans 184 residues: Probable chemoreceptor glutamine deamidase CheD (184 aa).

It belongs to the CheD family.

The catalysed reaction is L-glutaminyl-[protein] + H2O = L-glutamyl-[protein] + NH4(+). Its function is as follows. Probably deamidates glutamine residues to glutamate on methyl-accepting chemotaxis receptors (MCPs), playing an important role in chemotaxis. The sequence is that of Probable chemoreceptor glutamine deamidase CheD from Rhizobium rhizogenes (strain K84 / ATCC BAA-868) (Agrobacterium radiobacter).